An 855-amino-acid chain; its full sequence is Envelope glycoprotein gp150 (855 aa).

Residues 1-784 (MAEGFAANRQ…WIGNIPQYLK (784 aa)) lie on the Extracellular side of the membrane. Asparagine 220, asparagine 258, asparagine 269, asparagine 274, asparagine 298, asparagine 336, asparagine 418, asparagine 422, asparagine 448, asparagine 469, asparagine 481, asparagine 499, asparagine 518, asparagine 531, asparagine 548, and asparagine 551 each carry an N-linked (GlcNAc...) asparagine; by host glycan. The interval 615–635 (VMLALATVLSMAGAGTGATAI) is fusion peptide. Positions 642 to 692 (HQVLATHQETIEKVTEALKINNLRLVTLEHQVLVIGLKVEAMEKFLYTAFA) form a coiled coil. The tract at residues 661 to 679 (INNLRLVTLEHQVLVIGLK) is immunosuppression. N-linked (GlcNAc...) asparagine; by host glycosylation is found at asparagine 716, asparagine 720, asparagine 728, and asparagine 736. A coiled-coil region spans residues 735–771 (YNQTKELQQKFYEIIMNIEQNNVQVKKGLQQLQEWED). The helical transmembrane segment at 785-805 (GLLGGILGIGIGVLLLILCLP) threads the bilayer. Residues 806–855 (TLVDCIRNCISKVLGYTVIAMPEIGDEEETVQMELRKNGRQCGMSEKEEE) lie on the Cytoplasmic side of the membrane.

The mature envelope protein (Env) consists of a trimer of SU-TM heterodimers attached by noncovalent interactions or by a labile interchain disulfide bond. Specific enzymatic cleavages in vivo yield mature proteins. Envelope glycoproteins are synthesized as an inactive precursor that is N-glycosylated and processed likely by host cell furin or by a furin-like protease in the Golgi to yield the mature SU and TM proteins. The cleavage site between SU and TM requires the minimal sequence [KR]-X-[KR]-R.

The protein localises to the virion membrane. Its subcellular location is the host cell membrane. The surface protein (SU) attaches the virus to the host cell by binding to its receptor. This interaction triggers the refolding of the transmembrane protein (TM) and is thought to activate its fusogenic potential by unmasking its fusion peptide. Fusion occurs at the host cell plasma membrane. Its function is as follows. The transmembrane protein (TM) acts as a class I viral fusion protein. Under the current model, the protein has at least 3 conformational states: pre-fusion native state, pre-hairpin intermediate state, and post-fusion hairpin state. During viral and target cell membrane fusion, the coiled coil regions (heptad repeats) assume a trimer-of-hairpins structure, positioning the fusion peptide in close proximity to the C-terminal region of the ectodomain. The formation of this structure appears to drive apposition and subsequent fusion of viral and target cell membranes. Membranes fusion leads to delivery of the nucleocapsid into the cytoplasm. The chain is Envelope glycoprotein gp150 (env) from Felidae (cat family).